The following is a 455-amino-acid chain: Bifunctional protein GlmU (455 aa).

Positions 1-226 (MSLDIVILAA…AMEVQGANDR (226 aa)) are pyrophosphorylase. Residues 8–11 (LAAG), Lys-22, Gln-73, 78–79 (GT), 99–101 (YGD), Gly-136, Glu-151, Asn-166, and Asn-224 contribute to the UDP-N-acetyl-alpha-D-glucosamine site. Asp-101 contributes to the Mg(2+) binding site. Residue Asn-224 participates in Mg(2+) binding. Residues 227–247 (KQLSELERHYQMREARRLMAA) are linker. The interval 248 to 455 (GVTLRDPARF…WKRPVKISKD (208 aa)) is N-acetyltransferase. Residues Arg-330 and Lys-348 each coordinate UDP-N-acetyl-alpha-D-glucosamine. The active-site Proton acceptor is His-360. Residues Tyr-363 and Asn-374 each contribute to the UDP-N-acetyl-alpha-D-glucosamine site. Acetyl-CoA-binding positions include Ala-377, 383-384 (NY), Ser-402, Ala-420, and Arg-437.

In the N-terminal section; belongs to the N-acetylglucosamine-1-phosphate uridyltransferase family. It in the C-terminal section; belongs to the transferase hexapeptide repeat family. Homotrimer. It depends on Mg(2+) as a cofactor.

It localises to the cytoplasm. It catalyses the reaction alpha-D-glucosamine 1-phosphate + acetyl-CoA = N-acetyl-alpha-D-glucosamine 1-phosphate + CoA + H(+). It carries out the reaction N-acetyl-alpha-D-glucosamine 1-phosphate + UTP + H(+) = UDP-N-acetyl-alpha-D-glucosamine + diphosphate. The protein operates within nucleotide-sugar biosynthesis; UDP-N-acetyl-alpha-D-glucosamine biosynthesis; N-acetyl-alpha-D-glucosamine 1-phosphate from alpha-D-glucosamine 6-phosphate (route II): step 2/2. It participates in nucleotide-sugar biosynthesis; UDP-N-acetyl-alpha-D-glucosamine biosynthesis; UDP-N-acetyl-alpha-D-glucosamine from N-acetyl-alpha-D-glucosamine 1-phosphate: step 1/1. It functions in the pathway bacterial outer membrane biogenesis; LPS lipid A biosynthesis. Functionally, catalyzes the last two sequential reactions in the de novo biosynthetic pathway for UDP-N-acetylglucosamine (UDP-GlcNAc). The C-terminal domain catalyzes the transfer of acetyl group from acetyl coenzyme A to glucosamine-1-phosphate (GlcN-1-P) to produce N-acetylglucosamine-1-phosphate (GlcNAc-1-P), which is converted into UDP-GlcNAc by the transfer of uridine 5-monophosphate (from uridine 5-triphosphate), a reaction catalyzed by the N-terminal domain. The sequence is that of Bifunctional protein GlmU from Pseudomonas syringae pv. syringae (strain B728a).